The primary structure comprises 885 residues: Alanine--tRNA ligase (885 aa).

The Zn(2+) site is built by histidine 574, histidine 578, cysteine 685, and histidine 689.

It belongs to the class-II aminoacyl-tRNA synthetase family. Requires Zn(2+) as cofactor.

Its subcellular location is the cytoplasm. It carries out the reaction tRNA(Ala) + L-alanine + ATP = L-alanyl-tRNA(Ala) + AMP + diphosphate. Its function is as follows. Catalyzes the attachment of alanine to tRNA(Ala) in a two-step reaction: alanine is first activated by ATP to form Ala-AMP and then transferred to the acceptor end of tRNA(Ala). Also edits incorrectly charged Ser-tRNA(Ala) and Gly-tRNA(Ala) via its editing domain. The chain is Alanine--tRNA ligase from Deinococcus geothermalis (strain DSM 11300 / CIP 105573 / AG-3a).